The chain runs to 149 residues: Calmodulin (149 aa).

An N-acetylalanine modification is found at A2. EF-hand domains are found at residues 8–43, 44–79, 81–116, and 117–149; these read EQIA…LGQN, PTEA…KMKD, DSEE…LGEK, and LTDE…MTSK. D21, D23, D25, T27, E32, D57, D59, N61, T63, E68, D94, D96, N98, and E105 together coordinate Ca(2+). The residue at position 116 (K116) is an N6,N6,N6-trimethyllysine. Residues D130, D132, D134, Q136, and E141 each contribute to the Ca(2+) site.

The protein belongs to the calmodulin family.

In terms of biological role, calmodulin mediates the control of a large number of enzymes, ion channels and other proteins by Ca(2+). Among the enzymes to be stimulated by the calmodulin-Ca(2+) complex are a number of protein kinases and phosphatases. This chain is Calmodulin, found in Metridium senile (Brown sea anemone).